The sequence spans 161 residues: MNIDDDLQALTKQEATLTFSHFDHNTAWELGSALRSAAERARLSIAIEIQLAGQTLFYYAMPGTTPDIADWVRRKRNVVNHFHKSSYAIGLRLQQRQSTLEERYGLSVRDYSAHGGAFPINLAGLGCIGTISISGSPQLEDHNLLVSTLAHFLGLSLPAVH.

This sequence belongs to the UPF0303 family.

In Serratia proteamaculans (strain 568), this protein is UPF0303 protein Spro_1996.